A 98-amino-acid chain; its full sequence is Large ribosomal subunit protein bL25 (98 aa).

Residues 1–22 form a disordered region; sequence MANFVLNATARNEDKQGKGASR.

Belongs to the bacterial ribosomal protein bL25 family. As to quaternary structure, part of the 50S ribosomal subunit; part of the 5S rRNA/L5/L18/L25 subcomplex. Contacts the 5S rRNA. Binds to the 5S rRNA independently of L5 and L18.

In terms of biological role, this is one of the proteins that binds to the 5S RNA in the ribosome where it forms part of the central protuberance. This is Large ribosomal subunit protein bL25 from Acinetobacter baylyi (strain ATCC 33305 / BD413 / ADP1).